We begin with the raw amino-acid sequence, 947 residues long: Protein translocase subunit SecA (947 aa).

ATP-binding positions include Gln-87, 105-109 (GEGKT), and Asp-494. Residues 860 to 947 (TAPKPLPTQE…NRAPKSKRKR (88 aa)) are disordered. The span at 870–885 (AAARTTGTAAPTALRA) shows a compositional bias: low complexity. Basic and acidic residues-rich tracts occupy residues 903 to 914 (EDGKAKATRDSA) and 922 to 931 (ASRRERREAA).

The protein belongs to the SecA family. In terms of assembly, monomer and homodimer. Part of the essential Sec protein translocation apparatus which comprises SecA, SecYEG and auxiliary proteins SecDF. Other proteins may also be involved.

It is found in the cell membrane. Its subcellular location is the cytoplasm. The catalysed reaction is ATP + H2O + cellular proteinSide 1 = ADP + phosphate + cellular proteinSide 2.. Part of the Sec protein translocase complex. Interacts with the SecYEG preprotein conducting channel. Has a central role in coupling the hydrolysis of ATP to the transfer of proteins into and across the cell membrane, serving as an ATP-driven molecular motor driving the stepwise translocation of polypeptide chains across the membrane. The polypeptide is Protein translocase subunit SecA (Rhodococcus erythropolis (strain PR4 / NBRC 100887)).